Reading from the N-terminus, the 281-residue chain is CDAN1-interacting nuclease 1 (281 aa).

Residue threonine 114 is modified to Phosphothreonine.

The protein resides in the nucleus. It localises to the cytoplasm. In terms of biological role, plays a role in erythroid cell differentiation. This chain is CDAN1-interacting nuclease 1, found in Mus musculus (Mouse).